A 414-amino-acid polypeptide reads, in one-letter code: MTQANLSETLFKPRFKHPETSTLVRRFNHGAQPPVQSALDGKTIPHWYRMINRLMWIWRGIDPREILDVQARIVMSDAERTDDDLYDTVIGYRGGNWIYEWATQAMVWQQKACAEEDPQLSGRHWLHAATLYNIAAYPHLKGDDLAEQAQALSNRAYEEAAQRLPGTMRQMEFTVPGGAPITGFLHMPKGDGPFPTVLMCGGLDAMQTDYYSLYERYFAPRGIVMLTIDMPSVGFSSKWKLTQDSSLLHQHVLKALPNVPWVDHTRVAAFGFRFGANVAVRLAYLESPRLKAVACLGPVVHTLLSDFKCQQQVPEMYLDVLASRLGMHDASDEALRVELNRYSLKVQGLLGRRCPTPMLSGYWKNDPFSPEEDSRLITSSSADGKLLEIPFNPVYRNFDKGLQEITGWIEKRLC.

This sequence belongs to the FrsA family.

The catalysed reaction is a carboxylic ester + H2O = an alcohol + a carboxylate + H(+). Catalyzes the hydrolysis of esters. The chain is Esterase FrsA from Shigella boydii serotype 4 (strain Sb227).